The primary structure comprises 2241 residues: GON-4-like protein (2241 aa).

Disordered regions lie at residues 1-46 (MLPC…SSVS) and 122-259 (KLHA…GRGQ). Positions 30–40 (SAVKPESDQVK) are enriched in basic and acidic residues. Over residues 122–135 (KLHATGSKRGKKMT) the composition is skewed to basic residues. Over residues 143 to 152 (QEDRCDHLTL) the composition is skewed to basic and acidic residues. Residues 183–201 (PSGSQSAKPVSQPRKSTQP) show a composition bias toward polar residues. Residue serine 206 is modified to Phosphoserine. Basic residues predominate over residues 243-255 (RRKKKKGTKRKRD). Serine 346 bears the Phosphoserine mark. Residues 366–394 (EDDSSDEEYQPDDEEEDETAEESLLESDV) show a composition bias toward acidic residues. Positions 366–460 (EDDSSDEEYQ…PPKPKQTRDS (95 aa)) are disordered. Positions 600 to 1339 (EMGFSNMEDD…EEAREEISGS (740 aa)) are required for interaction with YY1, SIN3A and HDAC1, and transcriptional repression activity. At serine 775 the chain carries Phosphoserine. 2 disordered regions span residues 1008–1031 (PSPSLQPSFNPGKTPARSTHSEAP) and 1111–1131 (RKPYVRRRPSKRRGVKASPCM). The segment covering 1111 to 1125 (RKPYVRRRPSKRRGV) has biased composition (basic residues). A Phosphoserine modification is found at serine 1268. Disordered regions lie at residues 1301-1320 (ALEPLPQGIQESLNNPTPGD) and 1356-1601 (LDTG…RARA). Residues 1386-1416 (PTKTPSSSQEPPDEGTSGTDVNKGSSKNALS) show a composition bias toward polar residues. Serine 1426 is modified (phosphoserine). Residues 1434–1443 (SSSVDGQSVG) are compositionally biased toward polar residues. Composition is skewed to acidic residues over residues 1458 to 1476 (EEEEEEDFDDLTQDEEDEM) and 1510 to 1534 (GESEEENSQEENSEPEEEEEEEAEG). Residues 1586–1600 (RNNHRARNKRGSRAR) are compositionally biased toward basic residues. PAH domains lie at 1624 to 1696 (EQKD…LLPE) and 1706 to 1777 (EQQA…FDHL). The disordered stretch occupies residues 1809–1960 (PDVEEEEEPP…AVGSTLPSPR (152 aa)). Basic and acidic residues-rich tracts occupy residues 1836–1848 (NHDKETEWPDGAK) and 1879–1901 (CDSKSYKSKEPHELVGSSPHREA). 3 positions are modified to phosphoserine: serine 1896, serine 1902, and serine 1977. Disordered regions lie at residues 2002–2025 (EVRSCPKASPRLQKEREGQKAVSE), 2039–2149 (EKLP…VSST), and 2208–2241 (CEASSEDEDDATSTSNADQLSDHGDLLSEEELDE). Serine 2107 carries the post-translational modification Phosphoserine. Positions 2140–2149 (CANNSKVSST) are enriched in polar residues. Positions 2148 to 2201 (STGEKVVLWTREADRVILTMCQEQGAQPQTFNIISQQLGNKTPAEVSHRFRELM) constitute a Myb-like domain.

In terms of assembly, found in a complex with YY1, SIN3A and HDAC1.

It localises to the nucleus. Has transcriptional repressor activity, probably as part of a complex with YY1, SIN3A and HDAC1. Required for B cell lymphopoiesis. The sequence is that of GON-4-like protein (GON4L) from Homo sapiens (Human).